Consider the following 136-residue polypeptide: Serine--glyoxylate aminotransferase (136 aa).

Belongs to the class-V pyridoxal-phosphate-dependent aminotransferase family. In terms of assembly, homodimer. Requires pyridoxal 5'-phosphate as cofactor. Expressed in leaves but not in root tissue or seedlings.

The protein localises to the peroxisome. The catalysed reaction is glyoxylate + L-serine = 3-hydroxypyruvate + glycine. It carries out the reaction glyoxylate + L-alanine = glycine + pyruvate. Inhibited by aminooxyacetate. The protein is Serine--glyoxylate aminotransferase of Zea mays (Maize).